Consider the following 490-residue polypeptide: tRNA-guanine(15) transglycosylase (490 aa).

Asp-92 (nucleophile) is an active-site residue. The substrate site is built by Asp-127 and Ala-195. Zn(2+)-binding residues include Cys-278, Cys-280, and Cys-283.

Belongs to the archaeosine tRNA-ribosyltransferase family. Zn(2+) serves as cofactor.

It catalyses the reaction guanosine(15) in tRNA + 7-cyano-7-deazaguanine = 7-cyano-7-carbaguanosine(15) in tRNA + guanine. It participates in tRNA modification; archaeosine-tRNA biosynthesis. Exchanges the guanine residue with 7-cyano-7-deazaguanine (preQ0) at position 15 in the dihydrouridine loop (D-loop) of archaeal tRNAs. In Haloarcula marismortui (strain ATCC 43049 / DSM 3752 / JCM 8966 / VKM B-1809) (Halobacterium marismortui), this protein is tRNA-guanine(15) transglycosylase.